A 186-amino-acid chain; its full sequence is Serine hydrolase RBBP9 (186 aa).

Residues 63 to 67 are involved in binding to RB1; that stretch reads LHCDE. Catalysis depends on charge relay system residues Ser-75, Asp-138, and His-165.

This sequence belongs to the RBBP9 family. As to quaternary structure, interacts with RB1; the interaction disrupts RB1 binding to E2F1. Interacts with RBL1 and RBL2. As to expression, highly expressed in the spleen, testis and kidney. Also found in the heart, liver, lung and brain.

The catalysed reaction is valacyclovir + H2O = acyclovir + L-valine + H(+). Its function is as follows. Serine hydrolase. Catalyzes the hydrolytic activation of amino acid ester of the antiviral prodrug valacyclovir to its corresponding active drug, acyclovir. May negatively regulate basal or autocrine TGF-beta signaling by suppressing SMAD2-SMAD3 phosphorylation. May play a role in the transformation process due to its capacity to confer resistance to the growth-inhibitory effects of TGF-beta through interaction with RB1 and the subsequent displacement of E2F1. This is Serine hydrolase RBBP9 from Rattus norvegicus (Rat).